The primary structure comprises 1209 residues: Phospholipid-transporting ATPase ID (1209 aa).

At 1–68 (MTVPKEIPEK…NIVTFLPVNL (68 aa)) the chain is on the cytoplasmic side. The disordered stretch occupies residues 12–36 (ARAGAPPSWSQKKPSWGTEEERRAR). A helical transmembrane segment spans residues 69–89 (FEQFQEVANTYFLFLLILQLI). Residues 90–91 (PQ) are Exoplasmic loop-facing. A helical membrane pass occupies residues 92-112 (ISSLSWFTTIVPLVLVLTITA). Over 113–295 (VKDATDDYFR…TSIDRLMNTL (183 aa)) the chain is Cytoplasmic. The chain crosses the membrane as a helical span at residues 296–316 (VLWIFGFLVCMGVILAIGNAI). The Exoplasmic loop portion of the chain corresponds to 317-338 (WEHEVGTRFQVYLPWDEAVDSA). A helical transmembrane segment spans residues 339 to 359 (FFSGFLSFWSYIIILNTVVPI). The Cytoplasmic segment spans residues 360–898 (SLYVSVEVIR…KFLCYFFYKN (539 aa)). Catalysis depends on D411, which acts as the 4-aspartylphosphate intermediate. Residues D411, K412, T413, E515, F556, K579, R613, T693, G694, D695, R807, and K813 each contribute to the ATP site. Residue D411 participates in Mg(2+) binding. T413 lines the Mg(2+) pocket. Position 833 (D833) interacts with Mg(2+). The ATP site is built by N836 and D837. Mg(2+) is bound at residue D837. A helical membrane pass occupies residues 899-919 (FAFTMVHFWFGFFCGFSAQTV). At 920–922 (YDQ) the chain is on the exoplasmic loop side. The chain crosses the membrane as a helical span at residues 923–943 (YFITLYNIVYTSLPVLAMGVF). At 944–972 (DQDVPEQRSMEYPKLYEPGQLNLLFNKRE) the chain is on the cytoplasmic side. The helical transmembrane segment at 973–993 (FFICIAQGIYTSVLMFFIPYG) threads the bilayer. At 994 to 1011 (VFAEATRDDGTQLADYQS) the chain is on the exoplasmic loop side. Residues 1012-1032 (FAVTVATSLVIVVSVQIGLDT) traverse the membrane as a helical segment. Over 1033-1036 (GYWT) the chain is Cytoplasmic. A helical membrane pass occupies residues 1037–1057 (AINHFFIWGSLAVYFAILFAM). Over 1058–1082 (HSNGLFDMFPNQFRFVGNAQNTLAQ) the chain is Exoplasmic loop. Residues 1083 to 1103 (PTVWLTIALTTAVCIMPVVAF) traverse the membrane as a helical segment. Topologically, residues 1104 to 1209 (RFLRLSLKPD…SGGAEKPLKG (106 aa)) are cytoplasmic. Residue S1175 is modified to Phosphoserine. The tract at residues 1179–1209 (RSSSSWIESLRRKKSDSANSPSGGAEKPLKG) is disordered.

This sequence belongs to the cation transport ATPase (P-type) (TC 3.A.3) family. Type IV subfamily. Component of a P4-ATPase flippase complex which consists of a catalytic alpha subunit ATP8B2 and an accessory beta subunit TMEM30A or TMEM30B. It depends on Mg(2+) as a cofactor. In terms of tissue distribution, expressed in brain and testes (at protein level).

The protein localises to the cell membrane. Its subcellular location is the endoplasmic reticulum membrane. The catalysed reaction is ATP + H2O + phospholipidSide 1 = ADP + phosphate + phospholipidSide 2.. It catalyses the reaction a 1,2-diacyl-sn-glycero-3-phosphocholine(out) + ATP + H2O = a 1,2-diacyl-sn-glycero-3-phosphocholine(in) + ADP + phosphate + H(+). Its function is as follows. Catalytic component of P4-ATPase flippase complex, which catalyzes the hydrolysis of ATP coupled to the transport of phosphatidylcholine (PC) from the outer to the inner leaflet of the plasma membrane. May contribute to the maintenance of membrane lipid asymmetry. The sequence is that of Phospholipid-transporting ATPase ID from Mus musculus (Mouse).